The chain runs to 297 residues: MAEPKSFNIPYRSKLTERIEPGQTLIIRGKTIDESKRFNINLHKDSPDFSGNDVPLHLSIRFDEGKIVYNAYTKGTWGKEERAKNPIKKGDDFDIRIRAHDSKFQVSINHKEVKNFEHRIPLNSVSHLSIDGDVVLNHVQWGGKYYPVPYESGIAADGLVPGKTLVVYGTPEKKAKKFNINLLKKNGDIALHFNPRFDEKANGFMCAKPTPGSVVRNSLVNGEWGNEEREGKNPFERLTAFDLEIRNEEFAFQIFVNGERFASYAHRVDPHDIAGLQIQGDIELTGIQVVNNQPAQE.

2 Galectin domains span residues 11–142 (YRSK…VQWG) and 151–290 (ESGI…IQVV). 224–230 (WGNEERE) provides a ligand contact to a beta-D-galactoside.

Binds galactose. The polypeptide is 32 kDa beta-galactoside-binding lectin lec-3 (lec-3) (Caenorhabditis elegans).